A 255-amino-acid polypeptide reads, in one-letter code: Ribonuclease HII (255 aa).

The 184-residue stretch at 72 to 255 (AIICGIDEVG…KSFEPIKSLL (184 aa)) folds into the RNase H type-2 domain. The a divalent metal cation site is built by aspartate 78, glutamate 79, and aspartate 170.

It belongs to the RNase HII family. Requires Mn(2+) as cofactor. Mg(2+) is required as a cofactor.

It is found in the cytoplasm. The enzyme catalyses Endonucleolytic cleavage to 5'-phosphomonoester.. Functionally, endonuclease that specifically degrades the RNA of RNA-DNA hybrids. This chain is Ribonuclease HII, found in Staphylococcus aureus (strain Mu3 / ATCC 700698).